Consider the following 855-residue polypeptide: DNA mismatch repair protein MutS (855 aa).

Residue 616–623 participates in ATP binding; the sequence is GPNMGGKS.

It belongs to the DNA mismatch repair MutS family.

This protein is involved in the repair of mismatches in DNA. It is possible that it carries out the mismatch recognition step. This protein has a weak ATPase activity. In Salmonella paratyphi C (strain RKS4594), this protein is DNA mismatch repair protein MutS.